A 166-amino-acid polypeptide reads, in one-letter code: Large ribosomal subunit protein uL10 (166 aa).

It belongs to the universal ribosomal protein uL10 family. In terms of assembly, part of the ribosomal stalk of the 50S ribosomal subunit. The N-terminus interacts with L11 and the large rRNA to form the base of the stalk. The C-terminus forms an elongated spine to which L12 dimers bind in a sequential fashion forming a multimeric L10(L12)X complex.

Forms part of the ribosomal stalk, playing a central role in the interaction of the ribosome with GTP-bound translation factors. This is Large ribosomal subunit protein uL10 from Shewanella sediminis (strain HAW-EB3).